Here is a 281-residue protein sequence, read N- to C-terminus: MGAITLDGKATRDEIFVDLKQRVSELNASGRTPGLATILVGEDPGSQAYVRGKHSDCAKVGITSIRRDLPADISTATLNETIDELNANPDCTGYIVQLPLPKHLDENAALERIDPGKDADGLHPTNLGRLVLNTPAPLPCTPRGIVHLLRRYDVPIAGAHVVVIGRGVTVGRPLGLLLTRRSENATVTLCHTGTRDLATLTRQADIIVAAVGVPHMLTADMVRPGAAVVDVGVSRVDGKLTGDVHPDVWEVAGHVSPNPGGVGPLTRAFLLTNVVELAEQR.

Residues 165–167 (GRG), T192, and V233 contribute to the NADP(+) site.

The protein belongs to the tetrahydrofolate dehydrogenase/cyclohydrolase family. In terms of assembly, homodimer.

The catalysed reaction is (6R)-5,10-methylene-5,6,7,8-tetrahydrofolate + NADP(+) = (6R)-5,10-methenyltetrahydrofolate + NADPH. It carries out the reaction (6R)-5,10-methenyltetrahydrofolate + H2O = (6R)-10-formyltetrahydrofolate + H(+). It functions in the pathway one-carbon metabolism; tetrahydrofolate interconversion. In terms of biological role, catalyzes the oxidation of 5,10-methylenetetrahydrofolate to 5,10-methenyltetrahydrofolate and then the hydrolysis of 5,10-methenyltetrahydrofolate to 10-formyltetrahydrofolate. This is Bifunctional protein FolD from Mycobacterium ulcerans (strain Agy99).